A 260-amino-acid polypeptide reads, in one-letter code: Putative protein phosphatase 2C-like protein 44 (260 aa).

In terms of domain architecture, PPM-type phosphatase spans 41-259 (YYTVDRLSYA…SSISCVVIRF (219 aa)).

It belongs to the PP2C family.

The sequence is that of Putative protein phosphatase 2C-like protein 44 from Arabidopsis thaliana (Mouse-ear cress).